The primary structure comprises 192 residues: Ion-translocating oxidoreductase complex subunit A (192 aa).

Transmembrane regions (helical) follow at residues 5–25 (LLLL…FLGL), 39–59 (IGMS…SYLV), 65–85 (LPFD…AVVV), 102–122 (ALGI…VALL), 134–154 (AIFG…FSAM), and 171–191 (AIAM…TGLV).

Belongs to the NqrDE/RnfAE family. In terms of assembly, the complex is composed of six subunits: RnfA, RnfB, RnfC, RnfD, RnfE and RnfG.

It localises to the cell inner membrane. Functionally, part of a membrane-bound complex that couples electron transfer with translocation of ions across the membrane. The chain is Ion-translocating oxidoreductase complex subunit A from Shewanella pealeana (strain ATCC 700345 / ANG-SQ1).